The chain runs to 572 residues: Probable cysteine--tRNA ligase, mitochondrial (572 aa).

C81 serves as a coordination point for Zn(2+). G82 is an L-cysteine binding site. A 'HIGH' region motif is present at residues 83–93 (PTVYDHAHLGH). T122 contacts L-cysteine. The short motif at 127–130 (KIIK) is the 'KIIK' region element. Residues C260, H285, and E289 each coordinate Zn(2+). H285 is an L-cysteine binding site. A 'KMSKS' region motif is present at residues 320–324 (KMSKS). K323 lines the ATP pocket.

It belongs to the class-I aminoacyl-tRNA synthetase family. Requires Zn(2+) as cofactor.

The protein resides in the mitochondrion. The enzyme catalyses tRNA(Cys) + L-cysteine + ATP = L-cysteinyl-tRNA(Cys) + AMP + diphosphate. The catalysed reaction is 2 L-cysteine = S-sulfanyl-L-cysteine + L-alanine. It carries out the reaction S-sulfanyl-L-cysteine + L-cysteine = S-disulfanyl-L-cysteine + L-alanine. It catalyses the reaction S-sulfanyl-L-cysteine + tRNA(Cys) + ATP = (S)-sulfanyl-L-cysteinyl-tRNA(Cys) + AMP + diphosphate. The enzyme catalyses S-disulfanyl-L-cysteine + tRNA(Cys) + ATP = (S)-disulfanyl-L-cysteinyl-tRNA(Cys) + AMP + diphosphate. In terms of biological role, mitochondrial cysteine-specific aminoacyl-tRNA synthetase that catalyzes the ATP-dependent ligation of cysteine to tRNA(Cys). Its function is as follows. In addition to its role as an aminoacyl-tRNA synthetase, has also cysteine persulfide synthase activity. Produces reactive persulfide species such as cysteine persulfide (CysSSH) from substrate cysteine and mediate direct incorporation of CysSSH into proteins during translations, resulting in protein persulfides and polysulfides. CysSSHs behave as potent antioxidants and cellular protectants. This is Probable cysteine--tRNA ligase, mitochondrial (cars2) from Xenopus tropicalis (Western clawed frog).